The primary structure comprises 536 residues: Chaperonin GroEL (536 aa).

ATP contacts are provided by residues 30 to 33, 86 to 90, glycine 414, and aspartate 494; these read TLGP and DGTTT.

Belongs to the chaperonin (HSP60) family. Forms a cylinder of 14 subunits composed of two heptameric rings stacked back-to-back. Interacts with the co-chaperonin GroES.

It localises to the cytoplasm. It catalyses the reaction ATP + H2O + a folded polypeptide = ADP + phosphate + an unfolded polypeptide.. Its function is as follows. Together with its co-chaperonin GroES, plays an essential role in assisting protein folding. The GroEL-GroES system forms a nano-cage that allows encapsulation of the non-native substrate proteins and provides a physical environment optimized to promote and accelerate protein folding. The sequence is that of Chaperonin GroEL from Methanospirillum hungatei JF-1 (strain ATCC 27890 / DSM 864 / NBRC 100397 / JF-1).